The following is a 147-amino-acid chain: Epididymal secretory protein E3-beta (147 aa).

The signal sequence occupies residues 1–25; it reads MASSLKIWGTLLALLCILCTLLVQS.

Epididymis.

Its subcellular location is the secreted. Its function is as follows. Possible function in sperm maturation. In Homo sapiens (Human), this protein is Epididymal secretory protein E3-beta (EDDM3B).